A 410-amino-acid polypeptide reads, in one-letter code: Platelet-activating factor acetylhydrolase IB subunit alpha (410 aa).

Residues 1 to 38 (MVLSQRQRDELNRAIADYLRSNGYEEAYSVFKKEAELD) are required for self-association and interaction with PAFAH1B2 and PAFAH1B3. The tract at residues 1 to 66 (MVLSQRQRDE…SVIRLQKKVM (66 aa)) is interaction with NDE1. Positions 1-102 (MVLSQRQRDE…EWIPRPPEKY (102 aa)) are interaction with NDEL1. Residues 7 to 39 (QRDELNRAIADYLRSNGYEEAYSVFKKEAELDM) form the LisH domain. Residue Lys53 is modified to N6-acetyllysine. Residues 56-82 (TSVIRLQKKVMELESKLNEAKEEFTSG) are a coiled coil. Residues 83–410 (GPLGQKRDPK…DQTVKVWECR (328 aa)) are interaction with dynein and dynactin. 7 WD repeats span residues 106-147 (GHRS…RTLK), 148-187 (GHTDSVQDISFDHSGKLLASCSADMTIKLWDFQGFECIRT), 190-229 (GHDHNVSSVAIMPNGDHIVSAARDKTIKMWEVQTGYCVKT), 232-271 (GHREWVRMVRPNQDGTLIASCSNDQTVRVWVVATKECKAE), 274-333 (EHEH…CLMT), 336-377 (GHDN…KTLN), and 378-410 (AHEHFVTSLDFHKTAPYVVTGSVDQTVKVWECR). At Ser109 the chain carries Phosphoserine. The interaction with DCX stretch occupies residues 367-409 (YKNKRCMKTLNAHEHFVTSLDFHKTAPYVVTGSVDQTVKVWEC). An interaction with NDEL1 region spans residues 388–410 (FHKTAPYVVTGSVDQTVKVWECR).

Belongs to the WD repeat LIS1/nudF family. In terms of assembly, can self-associate. Component of the cytosolic PAF-AH (I) heterotetrameric enzyme, which is composed of PAFAH1B1 (beta), PAFAH1B2 (alpha2) and PAFAH1B3 (alpha1) subunits. The catalytic activity of the enzyme resides in the alpha1 (PAFAH1B3) and alpha2 (PAFAH1B2) subunits, whereas the beta subunit (PAFAH1B1) has regulatory activity. Trimer formation is not essential for the catalytic activity. Interacts with the catalytic dimer of PAF-AH (I) heterotetrameric enzyme: interacts with PAFAH1B2 homodimer (alpha2/alpha2 homodimer), PAFAH1B3 homodimer (alpha1/alpha1 homodimer) and PAFAH1B2-PAFAH1B3 heterodimer (alpha2/alpha1 heterodimer). Interacts with DCX, dynein, dynactin, IQGAP1, KATNB1, NDE1, NDEL1, NUDC and RSN. Interacts with DISC1, and this interaction is enhanced by NDEL1. Interacts with DAB1 when DAB1 is phosphorylated in response to RELN/reelin signaling. Interacts with INTS13. Interacts with DCDC1.

It localises to the cytoplasm. The protein resides in the cytoskeleton. It is found in the microtubule organizing center. Its subcellular location is the centrosome. The protein localises to the spindle. It localises to the nucleus membrane. In terms of biological role, regulatory subunit (beta subunit) of the cytosolic type I platelet-activating factor (PAF) acetylhydrolase (PAF-AH (I)), an enzyme that catalyzes the hydrolyze of the acetyl group at the sn-2 position of PAF and its analogs and participates in PAF inactivation. Regulates the PAF-AH (I) activity in a catalytic dimer composition-dependent manner. Positively regulates the activity of the minus-end directed microtubule motor protein dynein. May enhance dynein-mediated microtubule sliding by targeting dynein to the microtubule plus end. Required for several dynein- and microtubule-dependent processes such as the maintenance of Golgi integrity, the peripheral transport of microtubule fragments and the coupling of the nucleus and centrosome. Required during brain development for the proliferation of neuronal precursors and the migration of newly formed neurons from the ventricular/subventricular zone toward the cortical plate. Neuronal migration involves a process called nucleokinesis, whereby migrating cells extend an anterior process into which the nucleus subsequently translocates. During nucleokinesis dynein at the nuclear surface may translocate the nucleus towards the centrosome by exerting force on centrosomal microtubules. Also required for proper activation of Rho GTPases and actin polymerization at the leading edge of locomoting cerebellar neurons and postmigratory hippocampal neurons in response to calcium influx triggered via NMDA receptors. May also play a role in other forms of cell locomotion including the migration of fibroblasts during wound healing. Required for dynein recruitment to microtubule plus ends and BICD2-bound cargos. May modulate the Reelin pathway through interaction of the PAF-AH (I) catalytic dimer with VLDLR. This Sus scrofa (Pig) protein is Platelet-activating factor acetylhydrolase IB subunit alpha.